A 319-amino-acid polypeptide reads, in one-letter code: Cytochrome c biogenesis protein CcsA (319 aa).

The next 7 helical transmembrane spans lie at 9 to 29 (ILTHISFSLVSIGITIFLITL), 44 to 64 (GVIGTFLCITGLLVTRWAYSG), 71 to 91 (LYESLLFLSWSFAIIHMFPYL), 143 to 163 (MVLGYAALLCGSLLSVALLVI), 225 to 245 (IISLGFIFLTIGILSGAVWAN), 259 to 273 (TWAFITWTMFAIYLH), and 286 to 306 (AIVAFLGFIIIWICYFGVNLL).

This sequence belongs to the CcmF/CycK/Ccl1/NrfE/CcsA family. May interact with Ccs1.

The protein localises to the plastid. Its subcellular location is the chloroplast thylakoid membrane. In terms of biological role, required during biogenesis of c-type cytochromes (cytochrome c6 and cytochrome f) at the step of heme attachment. This Oenothera argillicola (Appalachian evening primrose) protein is Cytochrome c biogenesis protein CcsA.